The primary structure comprises 200 residues: Inner membrane protein E199L (200 aa).

An N-linked (GlcNAc...) asparagine; by host glycan is attached at Asn131. Residues 150–170 traverse the membrane as a helical segment; that stretch reads INVMNHPFLTLILIILILIII.

It belongs to the asfivirus E199L family. Interacts with host PYCR2; this interaction results in autophagy activation. Post-translationally, contains intramolecular disulfide bonds.

Its subcellular location is the virion membrane. It localises to the host membrane. Its function is as follows. Essential for viral fusion with host endosomal membrane and core release. Not required for virus morphogenesis and egress. Induces complete autophagy through the interaction with and down-regulation of host PYCR2. This is Inner membrane protein E199L from Ornithodoros (relapsing fever ticks).